Here is a 245-residue protein sequence, read N- to C-terminus: Probable phosphatase YcdX (245 aa).

The Zn(2+) site is built by H7, H9, H15, H40, E73, H101, H131, D192, and H194.

It belongs to the PHP family. Homotrimer. Zn(2+) serves as cofactor.

In Salmonella agona (strain SL483), this protein is Probable phosphatase YcdX.